The chain runs to 61 residues: Conotoxin 3 (61 aa).

The N-terminal stretch at 1-21 (MRCLPVFVILLLLIASVPSDA) is a signal peptide. The propeptide occupies 22 to 48 (VQLKTKDDMPLPSFNGNARRTPRMLSN). At W58 the chain carries 6'-bromotryptophan.

This sequence belongs to the conotoxin T superfamily. In terms of processing, contains 2 disulfide bonds that can be either 'C1-C3, C2-C4' or 'C1-C4, C2-C3', since these disulfide connectivities have been observed for conotoxins with cysteine framework V (for examples, see AC P0DQQ7 and AC P81755). Contains 2 disulfide bonds. In terms of tissue distribution, expressed by the venom duct.

Its subcellular location is the secreted. This is Conotoxin 3 from Conus textile (Cloth-of-gold cone).